Here is a 207-residue protein sequence, read N- to C-terminus: LexA repressor (207 aa).

The H-T-H motif DNA-binding region spans 28–48 (VREIGEAVGLASSSTVHGHLS). Catalysis depends on for autocatalytic cleavage activity residues Ser130 and Lys168.

Belongs to the peptidase S24 family. Homodimer.

It catalyses the reaction Hydrolysis of Ala-|-Gly bond in repressor LexA.. In terms of biological role, represses a number of genes involved in the response to DNA damage (SOS response), including recA and lexA. In the presence of single-stranded DNA, RecA interacts with LexA causing an autocatalytic cleavage which disrupts the DNA-binding part of LexA, leading to derepression of the SOS regulon and eventually DNA repair. The polypeptide is LexA repressor (Staphylococcus aureus (strain MSSA476)).